The primary structure comprises 454 residues: 3-phosphoshikimate 1-carboxyvinyltransferase (454 aa).

Residues K39, S40, and R44 each contribute to the 3-phosphoshikimate site. K39 contacts phosphoenolpyruvate. 2 residues coordinate phosphoenolpyruvate: G112 and R140. 4 residues coordinate 3-phosphoshikimate: S185, Q187, D333, and K360. Q187 is a binding site for phosphoenolpyruvate. Catalysis depends on D333, which acts as the Proton acceptor. R364 and R405 together coordinate phosphoenolpyruvate.

Belongs to the EPSP synthase family. Monomer.

It localises to the cytoplasm. It catalyses the reaction 3-phosphoshikimate + phosphoenolpyruvate = 5-O-(1-carboxyvinyl)-3-phosphoshikimate + phosphate. It participates in metabolic intermediate biosynthesis; chorismate biosynthesis; chorismate from D-erythrose 4-phosphate and phosphoenolpyruvate: step 6/7. Its function is as follows. Catalyzes the transfer of the enolpyruvyl moiety of phosphoenolpyruvate (PEP) to the 5-hydroxyl of shikimate-3-phosphate (S3P) to produce enolpyruvyl shikimate-3-phosphate and inorganic phosphate. The chain is 3-phosphoshikimate 1-carboxyvinyltransferase from Xylella fastidiosa (strain 9a5c).